Reading from the N-terminus, the 485-residue chain is UDP-N-acetylmuramoyl-L-alanyl-D-glutamate--2,6-diaminopimelate ligase (485 aa).

Residue serine 32 coordinates UDP-N-acetyl-alpha-D-muramoyl-L-alanyl-D-glutamate. Residue 111–117 (GTNGKTT) coordinates ATP. Residues 153 to 154 (TT), serine 180, and arginine 188 contribute to the UDP-N-acetyl-alpha-D-muramoyl-L-alanyl-D-glutamate site. Residue lysine 220 is modified to N6-carboxylysine. Meso-2,6-diaminopimelate-binding positions include arginine 382, 405 to 408 (DNPR), glycine 455, and glutamate 459. A Meso-diaminopimelate recognition motif motif is present at residues 405 to 408 (DNPR).

The protein belongs to the MurCDEF family. MurE subfamily. It depends on Mg(2+) as a cofactor. Carboxylation is probably crucial for Mg(2+) binding and, consequently, for the gamma-phosphate positioning of ATP.

The protein resides in the cytoplasm. The catalysed reaction is UDP-N-acetyl-alpha-D-muramoyl-L-alanyl-D-glutamate + meso-2,6-diaminopimelate + ATP = UDP-N-acetyl-alpha-D-muramoyl-L-alanyl-gamma-D-glutamyl-meso-2,6-diaminopimelate + ADP + phosphate + H(+). Its pathway is cell wall biogenesis; peptidoglycan biosynthesis. Functionally, catalyzes the addition of meso-diaminopimelic acid to the nucleotide precursor UDP-N-acetylmuramoyl-L-alanyl-D-glutamate (UMAG) in the biosynthesis of bacterial cell-wall peptidoglycan. The protein is UDP-N-acetylmuramoyl-L-alanyl-D-glutamate--2,6-diaminopimelate ligase of Chlamydia felis (strain Fe/C-56) (Chlamydophila felis).